A 197-amino-acid chain; its full sequence is Phosphoheptose isomerase (197 aa).

An SIS domain is found at 34-192 (MVNALINGNK…CEGVDDCLFP (159 aa)). Substrate-binding positions include 49-51 (NGG), Q62, 91-92 (ND), S122, and H172. Position 62 (Q62) interacts with Zn(2+). Residues H172 and H180 each contribute to the Zn(2+) site.

This sequence belongs to the SIS family. GmhA subfamily. As to quaternary structure, homotetramer. Zn(2+) serves as cofactor.

It localises to the cytoplasm. The enzyme catalyses 2 D-sedoheptulose 7-phosphate = D-glycero-alpha-D-manno-heptose 7-phosphate + D-glycero-beta-D-manno-heptose 7-phosphate. It participates in carbohydrate biosynthesis; D-glycero-D-manno-heptose 7-phosphate biosynthesis; D-glycero-alpha-D-manno-heptose 7-phosphate and D-glycero-beta-D-manno-heptose 7-phosphate from sedoheptulose 7-phosphate: step 1/1. Catalyzes the isomerization of sedoheptulose 7-phosphate in D-glycero-D-manno-heptose 7-phosphate. This Pseudoalteromonas atlantica (strain T6c / ATCC BAA-1087) protein is Phosphoheptose isomerase.